The primary structure comprises 264 residues: uncharacterized protein (264 aa).

The signal sequence occupies residues 1–22; the sequence is MKSIKRIGLCISLLILIIFVTS. A lipid anchor (N-palmitoyl cysteine) is attached at cysteine 23. Residue cysteine 23 is the site of S-diacylglycerol cysteine attachment.

This sequence belongs to the staphylococcal tandem lipoprotein family.

The protein resides in the cell membrane. This is an uncharacterized protein from Staphylococcus aureus (strain MRSA252).